Consider the following 479-residue polypeptide: Protein nucleotidyltransferase YdiU (479 aa).

8 residues coordinate ATP: glycine 83, glycine 85, arginine 86, lysine 106, aspartate 118, glycine 119, arginine 169, and arginine 176. Residue aspartate 245 is the Proton acceptor of the active site. Residues asparagine 246 and aspartate 255 each contribute to the Mg(2+) site. Residue aspartate 255 coordinates ATP.

This sequence belongs to the SELO family. It depends on Mg(2+) as a cofactor. Mn(2+) serves as cofactor.

It carries out the reaction L-seryl-[protein] + ATP = 3-O-(5'-adenylyl)-L-seryl-[protein] + diphosphate. It catalyses the reaction L-threonyl-[protein] + ATP = 3-O-(5'-adenylyl)-L-threonyl-[protein] + diphosphate. The catalysed reaction is L-tyrosyl-[protein] + ATP = O-(5'-adenylyl)-L-tyrosyl-[protein] + diphosphate. The enzyme catalyses L-histidyl-[protein] + UTP = N(tele)-(5'-uridylyl)-L-histidyl-[protein] + diphosphate. It carries out the reaction L-seryl-[protein] + UTP = O-(5'-uridylyl)-L-seryl-[protein] + diphosphate. It catalyses the reaction L-tyrosyl-[protein] + UTP = O-(5'-uridylyl)-L-tyrosyl-[protein] + diphosphate. Its function is as follows. Nucleotidyltransferase involved in the post-translational modification of proteins. It can catalyze the addition of adenosine monophosphate (AMP) or uridine monophosphate (UMP) to a protein, resulting in modifications known as AMPylation and UMPylation. In Erwinia tasmaniensis (strain DSM 17950 / CFBP 7177 / CIP 109463 / NCPPB 4357 / Et1/99), this protein is Protein nucleotidyltransferase YdiU.